The following is a 441-amino-acid chain: Arginine biosynthesis bifunctional protein ArgJ, mitochondrial (441 aa).

6 residues coordinate substrate: Thr-178, Lys-204, Thr-215, Glu-304, Asn-436, and Ser-441. The active-site Nucleophile is Thr-215.

This sequence belongs to the ArgJ family. In terms of assembly, heterodimer of an alpha and a beta chain. In terms of processing, the alpha and beta chains are autoproteolytically processed from a single precursor protein within the mitochondrion.

It localises to the mitochondrion matrix. The enzyme catalyses N(2)-acetyl-L-ornithine + L-glutamate = N-acetyl-L-glutamate + L-ornithine. It carries out the reaction L-glutamate + acetyl-CoA = N-acetyl-L-glutamate + CoA + H(+). It functions in the pathway amino-acid biosynthesis; L-arginine biosynthesis; L-ornithine and N-acetyl-L-glutamate from L-glutamate and N(2)-acetyl-L-ornithine (cyclic): step 1/1. It participates in amino-acid biosynthesis; L-arginine biosynthesis; N(2)-acetyl-L-ornithine from L-glutamate: step 1/4. Its function is as follows. Catalyzes two activities which are involved in the cyclic version of arginine biosynthesis: the synthesis of acetylglutamate from glutamate and acetyl-CoA, and of ornithine by transacetylation between acetylornithine and glutamate. The sequence is that of Arginine biosynthesis bifunctional protein ArgJ, mitochondrial from Lodderomyces elongisporus (strain ATCC 11503 / CBS 2605 / JCM 1781 / NBRC 1676 / NRRL YB-4239) (Yeast).